A 576-amino-acid chain; its full sequence is Arginine--tRNA ligase (576 aa).

A 'HIGH' region motif is present at residues proline 122 to histidine 132.

The protein belongs to the class-I aminoacyl-tRNA synthetase family. Monomer.

It is found in the cytoplasm. It carries out the reaction tRNA(Arg) + L-arginine + ATP = L-arginyl-tRNA(Arg) + AMP + diphosphate. In Hamiltonella defensa subsp. Acyrthosiphon pisum (strain 5AT), this protein is Arginine--tRNA ligase.